A 341-amino-acid chain; its full sequence is Basic membrane protein B (341 aa).

The N-terminal stretch at 1–14 is a signal peptide; it reads MRIAIFIFGILLTS. Residue C15 is the site of N-palmitoyl cysteine attachment. C15 is lipidated: S-diacylglycerol cysteine.

This sequence belongs to the BMP lipoprotein family. In terms of assembly, monomer.

Its subcellular location is the cell inner membrane. Its function is as follows. May be part of an ABC-type nucleoside uptake system involved in the purine salvage pathway. This Borreliella afzelii (strain PKo) (Borrelia afzelii) protein is Basic membrane protein B (bmpB).